Consider the following 387-residue polypeptide: Tetratricopeptide repeat protein 4 (387 aa).

An N-acetylmethionine modification is found at M1. S47 and S51 each carry phosphoserine. TPR repeat units lie at residues 79–112 (AKTYKDEGNDYFKEKDYKKAVISYTEGLKKKCAD), 117–150 (AVLYTNRAAAQYYLGNFRSALNDVTAARKLKPCH), and 151–184 (LKAIIRGALCHLELKHFAEAVNWCDEGLQIDAKE). S243 is subject to Phosphoserine.

The protein belongs to the TTC4 family. In terms of assembly, interacts (via TPR repeats) with HSP90AB1. Interacts with HSPA8 and CDC6. Interacts with TBK1. Interacts with MSL1. In terms of tissue distribution, highly expressed in proliferating tissue and tumor cell lines but not in normal cell lines.

It is found in the nucleus. The protein localises to the nucleoplasm. The protein resides in the cytoplasm. Its function is as follows. May act as a co-chaperone for HSP90AB1. Promotes Sendai virus (SeV)-induced host cell innate immune responses. The polypeptide is Tetratricopeptide repeat protein 4 (TTC4) (Homo sapiens (Human)).